The chain runs to 843 residues: Leucine--tRNA ligase (843 aa).

Residues 61–71 carry the 'HIGH' region motif; sequence PYPSGDLHMGH. The 'KMSKS' region motif lies at 606–610; that stretch reads AMSKS. An ATP-binding site is contributed by K609.

It belongs to the class-I aminoacyl-tRNA synthetase family.

It is found in the cytoplasm. It carries out the reaction tRNA(Leu) + L-leucine + ATP = L-leucyl-tRNA(Leu) + AMP + diphosphate. In Arthrobacter sp. (strain FB24), this protein is Leucine--tRNA ligase.